We begin with the raw amino-acid sequence, 1082 residues long: DNA-directed RNA polymerase subunit beta (1082 aa).

The protein belongs to the RNA polymerase beta chain family. As to quaternary structure, in plastids the minimal PEP RNA polymerase catalytic core is composed of four subunits: alpha, beta, beta', and beta''. When a (nuclear-encoded) sigma factor is associated with the core the holoenzyme is formed, which can initiate transcription.

The protein resides in the plastid. It is found in the chloroplast. It catalyses the reaction RNA(n) + a ribonucleoside 5'-triphosphate = RNA(n+1) + diphosphate. Its function is as follows. DNA-dependent RNA polymerase catalyzes the transcription of DNA into RNA using the four ribonucleoside triphosphates as substrates. The protein is DNA-directed RNA polymerase subunit beta of Euglena gracilis.